Here is a 152-residue protein sequence, read N- to C-terminus: Succinate dehydrogenase [ubiquinone] cytochrome b small subunit B, mitochondrial (152 aa).

A mitochondrion-targeting transit peptide spans 1–21 (MATLLRVSSLCRANRASAFKS). Topologically, residues 22–56 (LLIRPLPCLSQDLHMVQTSQIHTSPNHHAGSKAAS) are mitochondrial matrix. Residues 57 to 78 (MHWTGERALSVALLGLLPAAYL) traverse the membrane as a helical segment. The Mitochondrial intermembrane segment spans residues 79–83 (YPGAA). Residues 84–104 (MDYSLAAALTLHGHWGLGQVV) form a helical membrane-spanning segment. Residue His-95 coordinates heme b. Residues 105–113 (TDYVHGETK) are Mitochondrial matrix-facing. Tyr-107 provides a ligand contact to a ubiquinone. A helical transmembrane segment spans residues 114-135 (IKMANTSLFALSALTFAGLCYF). Topologically, residues 136-152 (NYHDVGICKAVAMLWSL) are mitochondrial intermembrane.

It belongs to the CybS family. In terms of assembly, component of complex II composed of four subunits: the flavoprotein (FP) SDHA, iron-sulfur protein (IP) SDHB, and a cytochrome b560 composed of SDHC and SDHD.

The protein resides in the mitochondrion inner membrane. It functions in the pathway carbohydrate metabolism; tricarboxylic acid cycle. Membrane-anchoring subunit of succinate dehydrogenase (SDH) that is involved in complex II of the mitochondrial electron transport chain and is responsible for transferring electrons from succinate to ubiquinone (coenzyme Q). SDH also oxidizes malate to the non-canonical enol form of oxaloacetate, enol-oxaloacetate. Enol-oxaloacetate, which is a potent inhibitor of the succinate dehydrogenase activity, is further isomerized into keto-oxaloacetate. This Xenopus laevis (African clawed frog) protein is Succinate dehydrogenase [ubiquinone] cytochrome b small subunit B, mitochondrial (sdhd-b).